Here is a 438-residue protein sequence, read N- to C-terminus: Probable trafficking protein particle complex subunit 13 homolog (438 aa).

The protein belongs to the TRAPPC13 family.

This Drosophila melanogaster (Fruit fly) protein is Probable trafficking protein particle complex subunit 13 homolog.